The following is a 323-amino-acid chain: Thymidylate synthase (323 aa).

DUMP-binding positions include Arg21 and 172 to 173; that span reads RR. Cys192 (nucleophile) is an active-site residue. Residues 214–217, Asn225, and 255–257 contribute to the dUMP site; these read RSND and HVY. Asp217 serves as a coordination point for (6R)-5,10-methylene-5,6,7,8-tetrahydrofolate. Ala322 is a (6R)-5,10-methylene-5,6,7,8-tetrahydrofolate binding site.

The protein belongs to the thymidylate synthase family. Bacterial-type ThyA subfamily. In terms of assembly, homodimer.

The protein resides in the cytoplasm. The catalysed reaction is dUMP + (6R)-5,10-methylene-5,6,7,8-tetrahydrofolate = 7,8-dihydrofolate + dTMP. It functions in the pathway pyrimidine metabolism; dTTP biosynthesis. Its function is as follows. Catalyzes the reductive methylation of 2'-deoxyuridine-5'-monophosphate (dUMP) to 2'-deoxythymidine-5'-monophosphate (dTMP) while utilizing 5,10-methylenetetrahydrofolate (mTHF) as the methyl donor and reductant in the reaction, yielding dihydrofolate (DHF) as a by-product. This enzymatic reaction provides an intracellular de novo source of dTMP, an essential precursor for DNA biosynthesis. The sequence is that of Thymidylate synthase from Pseudomonas syringae pv. tomato (strain ATCC BAA-871 / DC3000).